The chain runs to 78 residues: Large ribosomal subunit protein bL31 (78 aa).

Zn(2+) contacts are provided by Cys-16, Cys-18, Cys-38, and Cys-41.

The protein belongs to the bacterial ribosomal protein bL31 family. Type A subfamily. Part of the 50S ribosomal subunit. Zn(2+) serves as cofactor.

Binds the 23S rRNA. The protein is Large ribosomal subunit protein bL31 of Frankia casuarinae (strain DSM 45818 / CECT 9043 / HFP020203 / CcI3).